Reading from the N-terminus, the 693-residue chain is Ion-translocating oxidoreductase complex subunit C (693 aa).

2 4Fe-4S ferredoxin-type domains span residues 368–397 and 407–436; these read MEPV…QQLY and KARD…VQYY. The [4Fe-4S] cluster site is built by Cys-377, Cys-380, Cys-383, Cys-387, Cys-416, Cys-419, Cys-422, and Cys-426. Residues 539–548 show a composition bias toward basic and acidic residues; it reads REERVREKQS. A disordered region spans residues 539–564; sequence REERVREKQSQQETPATEVTPEELDP.

Belongs to the 4Fe4S bacterial-type ferredoxin family. RnfC subfamily. In terms of assembly, the complex is composed of six subunits: RnfA, RnfB, RnfC, RnfD, RnfE and RnfG. [4Fe-4S] cluster is required as a cofactor.

The protein resides in the cell inner membrane. Its function is as follows. Part of a membrane-bound complex that couples electron transfer with translocation of ions across the membrane. The polypeptide is Ion-translocating oxidoreductase complex subunit C (Pectobacterium atrosepticum (strain SCRI 1043 / ATCC BAA-672) (Erwinia carotovora subsp. atroseptica)).